Here is a 409-residue protein sequence, read N- to C-terminus: MLTNGLISLLAIAGLATNAFAGPIRKVSNAGAAGAIADKYIVVLKKGLSDSAVSKHTNRISSFHSNVARDLTGARAHGVGRKFRFSSTGFNGYVGGFDKATLQEILNSPEVDYVEQDTVVTTYAEQTDSTWGLDRISHEDYSAPYTYEYDETAAGAGTTVYVIDTGIRISHDEFQTVNGSSRATWGFNSVDKTDSDGNGHGTHCAGTIAGKTYGVSKKAKVVAVKVLSAGGSGSTAGVVSGMNWVAENATPNFSVASMSLGGSKSAALNTAVDAIFNAGITIVVAAGNENQDAKNVSPASAPNAITVGAIDSSNKIASFSNWGTLIDVFAPGVGVLSSWATSDKETKTISGTSMACPHVAGLAAYYISASEGGADPATITDKITSSAVSGQVTGNIRGSPNKIAYNGYA.

The N-terminal stretch at 1–21 (MLTNGLISLLAIAGLATNAFA) is a signal peptide. Positions 22-123 (GPIRKVSNAG…VEQDTVVTTY (102 aa)) are excised as a propeptide. Residues 39-122 (KYIVVLKKGL…YVEQDTVVTT (84 aa)) form the Inhibitor I9 domain. The 280-residue stretch at 130 to 409 (TWGLDRISHE…PNKIAYNGYA (280 aa)) folds into the Peptidase S8 domain. The Charge relay system role is filled by aspartate 164. N-linked (GlcNAc...) asparagine glycosylation is present at asparagine 178. Residue histidine 200 is the Charge relay system of the active site. Asparagine 252 carries an N-linked (GlcNAc...) asparagine glycan. Catalysis depends on serine 353, which acts as the Charge relay system.

This sequence belongs to the peptidase S8 family.

It localises to the secreted. With respect to regulation, inhibited by PMSF, SSI, the peptide Phe-Val and by Phe, but not by EDTA. Its function is as follows. Hydrolyzes gelatin, casein, the chromogenic substrate azocoll and the cuticle of the nematode P.redivivus. Immobilizes P.redivivus. This is Cuticle-degrading serine protease from Arthrobotrys oligospora (strain ATCC 24927 / CBS 115.81 / DSM 1491) (Nematode-trapping fungus).